Here is a 119-residue protein sequence, read N- to C-terminus: Ribonuclease P protein component (119 aa).

The protein belongs to the RnpA family. Consists of a catalytic RNA component (M1 or rnpB) and a protein subunit.

The catalysed reaction is Endonucleolytic cleavage of RNA, removing 5'-extranucleotides from tRNA precursor.. In terms of biological role, RNaseP catalyzes the removal of the 5'-leader sequence from pre-tRNA to produce the mature 5'-terminus. It can also cleave other RNA substrates such as 4.5S RNA. The protein component plays an auxiliary but essential role in vivo by binding to the 5'-leader sequence and broadening the substrate specificity of the ribozyme. This is Ribonuclease P protein component from Shewanella woodyi (strain ATCC 51908 / MS32).